The primary structure comprises 222 residues: Germin-like protein subfamily 1 member 20 (222 aa).

Residues 1 to 22 (MRVSQSLVPFAIIALVLSFVNA) form the signal peptide. Cysteines 32 and 48 form a disulfide. One can recognise a Cupin type-1 domain in the interval 62-213 (SGLNVPGNTN…AFQLDASVVK (152 aa)). N-linked (GlcNAc...) asparagine glycosylation is present at Asn77. Residues His110, His112, Glu117, and His159 each coordinate Mn(2+).

The protein belongs to the germin family. Oligomer (believed to be a pentamer but probably hexamer). As to expression, expressed in stems and developing embryos.

It localises to the secreted. It is found in the extracellular space. The protein localises to the apoplast. Its function is as follows. May play a role in plant defense. Probably has no oxalate oxidase activity even if the active site is conserved. The polypeptide is Germin-like protein subfamily 1 member 20 (GLP5A) (Arabidopsis thaliana (Mouse-ear cress)).